A 215-amino-acid chain; its full sequence is UPF0323 lipoprotein HP_0232 (215 aa).

Residues 1-27 form the signal peptide; it reads MKKPYRKISDYAIVGGLSALVMVSIVG. C28 is lipidated: N-palmitoyl cysteine. Residue C28 is the site of S-diacylglycerol cysteine attachment. Residues 158–169 show a composition bias toward polar residues; that stretch reads QRTYKSPQAYQR. Positions 158–215 are disordered; it reads QRTYKSPQAYQRSQNSFSKSAPSASSMGGASKGQSGFFGSSRPTSSPAVSSGTRGFNS. Low complexity predominate over residues 170-208; sequence SQNSFSKSAPSASSMGGASKGQSGFFGSSRPTSSPAVSS.

Belongs to the UPF0323 family.

Its subcellular location is the cell membrane. This is UPF0323 lipoprotein HP_0232 from Helicobacter pylori (strain ATCC 700392 / 26695) (Campylobacter pylori).